The chain runs to 279 residues: MTTRIDTKFAELKAEGRPALVTYFMGGDPDLETALKVMKALPKAGADVIELGMPFSDPMADGPAIQAAGLRALNAGQTLAKTLYMAAEFRKEDDTTPIVMMGYYNPIYVYGVERFLTDAKASGVDGLIVVDLPSEMDAELCIPAMKAGINFIRLTTPTTDDKRLPKVLHNSSGFVYYVSMNGITGAAIADTAKVGEAVRHIKKSTDLPICVGFGVKTPEQAAAIATHADSVVVGTAIVNAIAGELDEKGKVKGDPVAAATRLVHALAESVRATRLEAAQ.

Residues Glu50 and Asp61 each act as proton acceptor in the active site.

It belongs to the TrpA family. In terms of assembly, tetramer of two alpha and two beta chains.

It catalyses the reaction (1S,2R)-1-C-(indol-3-yl)glycerol 3-phosphate + L-serine = D-glyceraldehyde 3-phosphate + L-tryptophan + H2O. The protein operates within amino-acid biosynthesis; L-tryptophan biosynthesis; L-tryptophan from chorismate: step 5/5. In terms of biological role, the alpha subunit is responsible for the aldol cleavage of indoleglycerol phosphate to indole and glyceraldehyde 3-phosphate. The chain is Tryptophan synthase alpha chain from Brucella abortus (strain S19).